The primary structure comprises 216 residues: Heart- and neural crest derivatives-expressed protein 1 (216 aa).

Disordered stretches follow at residues 1 to 20 (MNLV…HPPH), 53 to 109 (APDF…RTES), and 165 to 203 (ELKK…KGRT). Residues 8–18 (AHHHHHHHSHP) show a composition bias toward basic residues. Low complexity predominate over residues 65 to 78 (TAVAAAAYGPDARP). A compositionally biased stretch (basic residues) spans 92–104 (LPKRKGSGPKKER). One can recognise a bHLH domain in the interval 94-146 (KRKGSGPKKERRRTESINSAFAELRECIPNVPADTKLSKIKTLRLATSYIAYL). The residue at position 107 (Thr-107) is a Phosphothreonine; by PLK4. Phosphoserine; by PLK4 is present on Ser-109. A compositionally biased stretch (basic and acidic residues) spans 165–174 (ELKKTDGGRE).

As to quaternary structure, efficient DNA binding requires dimerization with another bHLH protein. Forms homodimers and heterodimers with TCF3 gene products E12 and E47, HAND2 and HEY1, HEY2 and HEYL (hairy-related transcription factors). Interacts with MDFIC. Interacts with SOX15; the interaction enhances HAND1-induced differentiation of trophoblast giant cells. Post-translationally, phosphorylation by PLK4 disrupts the interaction with MDFIC and leads to translocation into the nucleoplasm, allowing dimerization and transcription factor activity. As to expression, smooth muscle cells of the gut and adrenal tissue.

The protein localises to the nucleus. It is found in the nucleoplasm. Its subcellular location is the nucleolus. Functionally, transcription factor that plays an essential role in both trophoblast giant cell differentiation and in cardiac morphogenesis. Binds the DNA sequence 5'-NRTCTG-3' (non-canonical E-box). Acts as a transcriptional repressor of SOX15. In the adult, could be required for ongoing expression of cardiac-specific genes. The sequence is that of Heart- and neural crest derivatives-expressed protein 1 (Hand1) from Mus musculus (Mouse).